Reading from the N-terminus, the 885-residue chain is Leucine--tRNA ligase (885 aa).

The 'HIGH' region motif lies at 48 to 58 (PYPSGKLHMGH). Residues 639 to 643 (TMSKS) carry the 'KMSKS' region motif. ATP is bound at residue Lys-642.

Belongs to the class-I aminoacyl-tRNA synthetase family.

It is found in the cytoplasm. The enzyme catalyses tRNA(Leu) + L-leucine + ATP = L-leucyl-tRNA(Leu) + AMP + diphosphate. The chain is Leucine--tRNA ligase from Bordetella pertussis (strain Tohama I / ATCC BAA-589 / NCTC 13251).